The chain runs to 399 residues: Probable dual-specificity RNA methyltransferase RlmN (399 aa).

The Proton acceptor role is filled by E102. Positions 108 to 385 (YLDRATVCVS…CTVRVERGVA (278 aa)) constitute a Radical SAM core domain. The cysteines at positions 115 and 390 are disulfide-linked. [4Fe-4S] cluster contacts are provided by C122, C126, and C129. S-adenosyl-L-methionine contacts are provided by residues 207–208 (GE), S239, 262–264 (SLH), and N347. C390 functions as the S-methylcysteine intermediate in the catalytic mechanism.

Belongs to the radical SAM superfamily. RlmN family. It depends on [4Fe-4S] cluster as a cofactor.

The protein localises to the cytoplasm. It catalyses the reaction adenosine(2503) in 23S rRNA + 2 reduced [2Fe-2S]-[ferredoxin] + 2 S-adenosyl-L-methionine = 2-methyladenosine(2503) in 23S rRNA + 5'-deoxyadenosine + L-methionine + 2 oxidized [2Fe-2S]-[ferredoxin] + S-adenosyl-L-homocysteine. It carries out the reaction adenosine(37) in tRNA + 2 reduced [2Fe-2S]-[ferredoxin] + 2 S-adenosyl-L-methionine = 2-methyladenosine(37) in tRNA + 5'-deoxyadenosine + L-methionine + 2 oxidized [2Fe-2S]-[ferredoxin] + S-adenosyl-L-homocysteine. Its function is as follows. Specifically methylates position 2 of adenine 2503 in 23S rRNA and position 2 of adenine 37 in tRNAs. This chain is Probable dual-specificity RNA methyltransferase RlmN, found in Roseiflexus castenholzii (strain DSM 13941 / HLO8).